The chain runs to 490 residues: MTPLYQLTVAQAREMLARGEISSLELTDALLTRIAAVEPKVRAFLVVDAAGARAQARAADARRAAGDASPLLGIPMGIKDVISTQGLRTTCASKMLENYTPVYDATAVARLKAAGAVILGKLNCDEFAMGSSTENSAFQQTRNPWNLERVPGGSSGGSAAAVAAGEAPAALGTDTGGSIRQPAALCGITGLKPTYGRVSRYGLVAFASSLDQIGPMARTVRDCAIVLRVIAGADPFDATCTDYPAPDYEAALTGDIRGLRIGVPREYFVAGMQPDVEAAVRTAIEVLREQGAEVCEISLPHTPYALPVYYLIAPAEASANLARFDGVRYGLRVPGESYFDELERTRGAGFGPEVRRRIMLGTYALSAGYYDAYYKRAQQVRTLIRRDYQQAFEQVDVIAAPTTPTVAFKIGAHTDDPLAMYLEDVCTLPLNLAGLPGLVVPCGFAEGLPIGLQLIGRAFDEESLLRVGDAYQRVTDWHTRMPEVREDGSA.

Active-site charge relay system residues include Lys79 and Ser154. Ser178 (acyl-ester intermediate) is an active-site residue.

This sequence belongs to the amidase family. GatA subfamily. In terms of assembly, heterotrimer of A, B and C subunits.

The enzyme catalyses L-glutamyl-tRNA(Gln) + L-glutamine + ATP + H2O = L-glutaminyl-tRNA(Gln) + L-glutamate + ADP + phosphate + H(+). Its function is as follows. Allows the formation of correctly charged Gln-tRNA(Gln) through the transamidation of misacylated Glu-tRNA(Gln) in organisms which lack glutaminyl-tRNA synthetase. The reaction takes place in the presence of glutamine and ATP through an activated gamma-phospho-Glu-tRNA(Gln). The sequence is that of Glutamyl-tRNA(Gln) amidotransferase subunit A from Roseiflexus castenholzii (strain DSM 13941 / HLO8).